Here is a 265-residue protein sequence, read N- to C-terminus: Mlc titration factor A (265 aa).

H111, H148, H152, and E211 together coordinate Zn(2+).

Belongs to the MtfA family. Interacts with Mlc. Zn(2+) serves as cofactor.

It localises to the cytoplasm. Involved in the modulation of the activity of the glucose-phosphotransferase system (glucose-PTS). Interacts with the transcriptional repressor Mlc, preventing its interaction with DNA and leading to the modulation of expression of genes regulated by Mlc, including ptsG, which encodes the PTS system glucose-specific EIICB component. In terms of biological role, shows zinc-dependent metallopeptidase activity. This chain is Mlc titration factor A, found in Pectobacterium atrosepticum (strain SCRI 1043 / ATCC BAA-672) (Erwinia carotovora subsp. atroseptica).